Here is a 537-residue protein sequence, read N- to C-terminus: Putative cysteine ligase BshC (537 aa).

This sequence belongs to the BshC family.

In terms of biological role, involved in bacillithiol (BSH) biosynthesis. May catalyze the last step of the pathway, the addition of cysteine to glucosamine malate (GlcN-Mal) to generate BSH. The chain is Putative cysteine ligase BshC from Staphylococcus saprophyticus subsp. saprophyticus (strain ATCC 15305 / DSM 20229 / NCIMB 8711 / NCTC 7292 / S-41).